Here is a 297-residue protein sequence, read N- to C-terminus: Formamidopyrimidine-DNA glycosylase (297 aa).

Pro2 serves as the catalytic Schiff-base intermediate with DNA. The active-site Proton donor is Glu3. Lys61 functions as the Proton donor; for beta-elimination activity in the catalytic mechanism. Arg120 and Arg176 together coordinate DNA. An FPG-type zinc finger spans residues His262–Arg296. Arg286 functions as the Proton donor; for delta-elimination activity in the catalytic mechanism.

Belongs to the FPG family. In terms of assembly, monomer. Zn(2+) is required as a cofactor.

It catalyses the reaction Hydrolysis of DNA containing ring-opened 7-methylguanine residues, releasing 2,6-diamino-4-hydroxy-5-(N-methyl)formamidopyrimidine.. The catalysed reaction is 2'-deoxyribonucleotide-(2'-deoxyribose 5'-phosphate)-2'-deoxyribonucleotide-DNA = a 3'-end 2'-deoxyribonucleotide-(2,3-dehydro-2,3-deoxyribose 5'-phosphate)-DNA + a 5'-end 5'-phospho-2'-deoxyribonucleoside-DNA + H(+). Its function is as follows. Involved in base excision repair of DNA damaged by oxidation or by mutagenic agents. Acts as a DNA glycosylase that recognizes and removes damaged bases. Has a preference for oxidized purines, such as 7,8-dihydro-8-oxoguanine (8-oxoG). Has AP (apurinic/apyrimidinic) lyase activity and introduces nicks in the DNA strand. Cleaves the DNA backbone by beta-delta elimination to generate a single-strand break at the site of the removed base with both 3'- and 5'-phosphates. This is Formamidopyrimidine-DNA glycosylase from Leifsonia xyli subsp. xyli (strain CTCB07).